The chain runs to 543 residues: Protein lin-14 (543 aa).

Disordered stretches follow at residues 165-228 and 268-291; these read PNGH…SSNH and APATNGTTNGATKAAGPERKPRKP. Positions 177–213 are enriched in polar residues; sequence SMQTDEQQVKWSSPSSVDSNGQKTDSSAASAGDNQNI. Residues 268–282 show a composition bias toward low complexity; it reads APATNGTTNGATKAA.

Cleaved by caspase ced-3 in vitro.

The protein resides in the nucleus. In terms of biological role, heterochronic protein which controls the choice of stage specific cell fates. Involved in the temporal progression of vulval fate patterning, possibly by inhibiting lin-12. Acts as a transcription factor involved in the stage-specific repression of insulin/insulin-like growth factor gene ins-33. The chain is Protein lin-14 (lin-14) from Caenorhabditis briggsae.